We begin with the raw amino-acid sequence, 510 residues long: Lysine--tRNA ligase (510 aa).

Mg(2+) contacts are provided by E420 and E427.

This sequence belongs to the class-II aminoacyl-tRNA synthetase family. As to quaternary structure, homodimer. It depends on Mg(2+) as a cofactor.

The protein resides in the cytoplasm. The catalysed reaction is tRNA(Lys) + L-lysine + ATP = L-lysyl-tRNA(Lys) + AMP + diphosphate. In Vibrio vulnificus (strain YJ016), this protein is Lysine--tRNA ligase.